The chain runs to 335 residues: Nucleotide-binding protein CYA_0911 (335 aa).

20–27 (GLTGSGKT) serves as a coordination point for ATP. The interval 306–335 (ARFGPPPPAAGVEQQQVRIPLAGVPAPPHD) is disordered.

Belongs to the RapZ-like family.

Its function is as follows. Displays ATPase and GTPase activities. This is Nucleotide-binding protein CYA_0911 from Synechococcus sp. (strain JA-3-3Ab) (Cyanobacteria bacterium Yellowstone A-Prime).